The primary structure comprises 430 residues: 3-phosphoshikimate 1-carboxyvinyltransferase (430 aa).

3-phosphoshikimate contacts are provided by K23, S24, and R28. K23 serves as a coordination point for phosphoenolpyruvate. Residues G93 and R121 each coordinate phosphoenolpyruvate. S166, Q168, D313, and K340 together coordinate 3-phosphoshikimate. Q168 is a phosphoenolpyruvate binding site. The active-site Proton acceptor is the D313. The phosphoenolpyruvate site is built by R344 and R386.

It belongs to the EPSP synthase family. As to quaternary structure, monomer.

Its subcellular location is the cytoplasm. It carries out the reaction 3-phosphoshikimate + phosphoenolpyruvate = 5-O-(1-carboxyvinyl)-3-phosphoshikimate + phosphate. The protein operates within metabolic intermediate biosynthesis; chorismate biosynthesis; chorismate from D-erythrose 4-phosphate and phosphoenolpyruvate: step 6/7. Its function is as follows. Catalyzes the transfer of the enolpyruvyl moiety of phosphoenolpyruvate (PEP) to the 5-hydroxyl of shikimate-3-phosphate (S3P) to produce enolpyruvyl shikimate-3-phosphate and inorganic phosphate. The protein is 3-phosphoshikimate 1-carboxyvinyltransferase of Anaeromyxobacter sp. (strain Fw109-5).